We begin with the raw amino-acid sequence, 49 residues long: uncharacterized protein (49 aa).

The disordered stretch occupies residues M1 to I49. Positions N9–E18 are enriched in basic and acidic residues.

This is an uncharacterized protein from Dictyostelium discoideum (Social amoeba).